We begin with the raw amino-acid sequence, 544 residues long: Chromosomal replication initiator protein DnaA (544 aa).

The segment at Met-1–Thr-71 is domain I, interacts with DnaA modulators. Residues Thr-71–Ser-207 are domain II. The span at Ala-90–Gly-105 shows a compositional bias: low complexity. Disordered regions lie at residues Ala-90–Ala-111 and Ala-180–Met-203. Positions Ser-191–Thr-200 are enriched in polar residues. The tract at residues Lys-208–Ser-424 is domain III, AAA+ region. Positions 252, 254, 255, and 256 each coordinate ATP. The interval Lys-425–Gly-544 is domain IV, binds dsDNA.

Belongs to the DnaA family. As to quaternary structure, oligomerizes as a right-handed, spiral filament on DNA at oriC.

Its subcellular location is the cytoplasm. Functionally, plays an essential role in the initiation and regulation of chromosomal replication. ATP-DnaA binds to the origin of replication (oriC) to initiate formation of the DNA replication initiation complex once per cell cycle. Binds the DnaA box (a 9 base pair repeat at the origin) and separates the double-stranded (ds)DNA. Forms a right-handed helical filament on oriC DNA; dsDNA binds to the exterior of the filament while single-stranded (ss)DNA is stabiized in the filament's interior. The ATP-DnaA-oriC complex binds and stabilizes one strand of the AT-rich DNA unwinding element (DUE), permitting loading of DNA polymerase. After initiation quickly degrades to an ADP-DnaA complex that is not apt for DNA replication. Binds acidic phospholipids. This Paraburkholderia xenovorans (strain LB400) protein is Chromosomal replication initiator protein DnaA.